The primary structure comprises 337 residues: Mitochondrial glutathione transporter SLC25A40 (337 aa).

Solcar repeat units lie at residues 14–132 (VTPL…LSAF), 140–224 (NETR…LKRW), and 234–328 (PTFM…GKSF). Helical transmembrane passes span 20–40 (MIASCTGAVLTSLMVTPLDVV), 104–124 (LWSGLPPTLVMAIPATVIYFT), 146–166 (IVAGVVARFGAVTVISPLELI), 200–221 (WAPTILRDVPFSAMYWYNYENL), 240–260 (FTSGALSGSFAAVATLPFDVV), and 299–319 (GLFTGLIPRLVKIVPACAIMI).

This sequence belongs to the mitochondrial carrier (TC 2.A.29) family.

It localises to the mitochondrion inner membrane. It catalyses the reaction glutathione(in) = glutathione(out). Its function is as follows. Probable mitochondrial transporter required for glutathione import into mitochondria. Glutathione, which plays key roles in oxidative metabolism, is produced exclusively in the cytosol and is imported in many organelles. Mitochondrial glutathione is required for the activity and stability of proteins containing iron-sulfur clusters, as well as erythropoiesis. The sequence is that of Mitochondrial glutathione transporter SLC25A40 from Mus musculus (Mouse).